A 232-amino-acid chain; its full sequence is Putative N-acetylmannosamine-6-phosphate 2-epimerase (232 aa).

It belongs to the NanE family.

It catalyses the reaction an N-acyl-D-glucosamine 6-phosphate = an N-acyl-D-mannosamine 6-phosphate. It functions in the pathway amino-sugar metabolism; N-acetylneuraminate degradation; D-fructose 6-phosphate from N-acetylneuraminate: step 3/5. Its function is as follows. Converts N-acetylmannosamine-6-phosphate (ManNAc-6-P) to N-acetylglucosamine-6-phosphate (GlcNAc-6-P). The polypeptide is Putative N-acetylmannosamine-6-phosphate 2-epimerase (Proteus mirabilis (strain HI4320)).